Reading from the N-terminus, the 525-residue chain is Anti-silencing protein 2 (525 aa).

Positions 467–525 (LPRVPTDSPQLPSKDKSQETAKKDDRPKLVANEPVTLDTSTPPVAQSLADSKHCSGLHK) are disordered. Residues 479–494 (SKDKSQETAKKDDRPK) show a composition bias toward basic and acidic residues.

In terms of biological role, derepression of silent mating type loci when overexpressed. The protein is Anti-silencing protein 2 (ASF2) of Saccharomyces cerevisiae (strain ATCC 204508 / S288c) (Baker's yeast).